The following is a 325-amino-acid chain: 2-oxoglutarate-dependent dioxygenase tropC (325 aa).

A Fe2OG dioxygenase domain is found at 185 to 287; that stretch reads PSIPMRLLHY…RYSVAFFLNG (103 aa). Fe cation is bound by residues H210, D212, and H269. R278 lines the 2-oxoglutarate pocket.

This sequence belongs to the iron/ascorbate-dependent oxidoreductase family. Requires Fe(2+) as cofactor.

Its pathway is secondary metabolite biosynthesis. In terms of biological role, 2-oxoglutarate-dependent dioxygenase; part of the gene cluster that mediates the biosynthesis of the tropolone class of fungal maleic anhydrides. The pathway begins with the synthesis of 3-methylorcinaldehyde by the non-reducing polyketide synthase (PKS) tropA. 3-methylorcinaldehyde is the substrate for the FAD-dependent monooxygenase tropB to yield a dearomatized hydroxycyclohexadione. The 2-oxoglutarate-dependent dioxygenase tropC then performs the oxidative ring expansion to provide the first tropolone metabolite stipitaldehyde. Trop D converts stipitaldehyde into stipitacetal which is in turn converted to stipitalide by the short-chain dehydrogenase/reductase tropE. The next steps involve tropF, tropG, tropH, tropI and tropJ to form successive tropolone maleic anhydrides including stipitaldehydic, stipitatonic and stipitatic acids. In Talaromyces stipitatus (strain ATCC 10500 / CBS 375.48 / QM 6759 / NRRL 1006) (Penicillium stipitatum), this protein is 2-oxoglutarate-dependent dioxygenase tropC.